The chain runs to 146 residues: Snaclec CTL-Eoc124 (146 aa).

A signal peptide spans Met1 to Ala23. 3 disulfides stabilise this stretch: Cys25/Cys36, Cys53/Cys142, and Cys119/Cys134. Residues Tyr32–Lys143 form the C-type lectin domain.

This sequence belongs to the snaclec family. As to quaternary structure, heterodimer; disulfide-linked. Expressed by the venom gland.

It is found in the secreted. In terms of biological role, interferes with one step of hemostasis (modulation of platelet aggregation, or coagulation cascade, for example). In Echis ocellatus (Ocellated saw-scaled viper), this protein is Snaclec CTL-Eoc124.